We begin with the raw amino-acid sequence, 551 residues long: MGEINRRNFLKASMLGAAAAAVASASAVKGMVSPLVADAADIVAPITETSEFPYKVDAKYQRYNSLKNFFEKTFDPEANKTPIKFHYDDVSKITGKKDTGKDLPTLNAERLGIKGRPATHTETSILFQTQHLGAMLTQRHNETGWTGLDEALNAGAWAVEFDYSGFNAAGGGPGSVIPLYPINPMTNEIANEPVMVPGLYNWDNIDVESVRQQGQQWKFESKEEASKMVKKATRLLGADLVGIAPYDERWTYSTWGRKILKPCKMPNGRTKYLPWDLPKMLSGGGVEVFGHAKFEPDWEKYAGFKPKSVIVFVLEEDYEAIRTSPSVISSATVGKSYSNMAEVAYKIAVFLRKLGYYAAPCGNDTGLSVPMAVQAGLGEAGRNGLLITQKFGPRHRIAKVYTDLELAPDKPRKFGVREFCRLCKKCADACPAQAISHEKDPKVLQPEDCEVAENPYTEKWHLDSNRCGSFWAYNGSPCANCVAVCSWNKVETWNHDVARIATQIPLLQDAARKFDEWFGYNGPVNPDERLESGYVQNMVKDFWNNPESIKQ.

A signal peptide (tat-type signal) is located at residues 1-39 (MGEINRRNFLKASMLGAAAAAVASASAVKGMVSPLVADA). Residues 411 to 440 (PRKFGVREFCRLCKKCADACPAQAISHEKD) form the 4Fe-4S ferredoxin-type 1 domain. Positions 420, 423, 426, 430, 467, 478, 481, and 485 each coordinate [4Fe-4S] cluster. The 4Fe-4S ferredoxin-type 2 domain maps to 478–496 (CANCVAVCSWNKVETWNHD).

Belongs to the PceA family. In terms of assembly, monomer. It depends on [4Fe-4S] cluster as a cofactor. Corrinoid is required as a cofactor. Predicted to be exported by the Tat system. The position of the signal peptide cleavage has been experimentally proven.

It is found in the cell membrane. The enzyme catalyses trichloroethene + chloride + A + H(+) = tetrachloroethene + AH2. It catalyses the reaction trichloroethene + AH2 = (Z)-1,2-dichloroethene + chloride + A + H(+). Its activity is regulated as follows. Activity is inhibited by ammonium ions. Photoreversibly inactivated by 1-iodopropane. Catalyzes the reductive dechlorination of tetrachloroethene (PCE) to trichloroethene (TCE) and of trichloroethene to cis-1,2-dichloroethene (DCE). Can also use trichlorofluoroethene, tetrachloromethane, hexachloroethane, tetrachloroethane, trichloroethane and 1,1,1-trichloro-2,2,2-trifluoroethane. Menaquinone can act as the electron donor. Reduced methyl viologen can act as the artificial electron donor. The sequence is that of Tetrachloroethene reductive dehalogenase from Dehalobacter restrictus (strain DSM 9455 / PER-K23).